The sequence spans 57 residues: UPF0057 membrane protein T23F2.4 (57 aa).

2 consecutive transmembrane segments (helical) span residues 3–23 (ITCM…VGVF) and 36–56 (ILLT…IILA).

The protein belongs to the UPF0057 (PMP3) family.

The protein resides in the membrane. This chain is UPF0057 membrane protein T23F2.4, found in Caenorhabditis elegans.